Reading from the N-terminus, the 702-residue chain is MDEDLNHNLFFKTIKFKFPKIFNTIESKCYTLCIPQSPSLYRMNITQKIVESHVFIESKYYQSEYETLNKESNYIIDNGYIMEKENNNKKVKIMFDELCYNKDYKSYRLICIEEPLTGGASGLNSSISRSESDLGDLLITQGIVKPQRPTFDQATQFFLLDSISTNINTIVFRKANQQLEEFERLHSINSKTDVDFFRKDLLLIHNRLMDDLVCANADFKQLHSNEKQMNSLSLILESYILGKIQNKLYGDLKRLYEKENQHLYEKMIYLSKLSFEDIGVKSDFEPHLTKAKEVIESFNTGINYINNNNNNNNNNNNNNNNNYNNNNNNNNNNNNNNNINNNINNNINNINSNNNNNNNNINNNNNNNNNNNNNNNNNNNNNNNEIIITPMDKLLSIVQGSREIEESIKARAILELADEDDILTITGDDALPLTAYLLIHARPKYLATDLAYCSKFILTDIFNSSYGYHLVNLIAAIDYIKSLDILSPTKTTTSSNNSRNTSPTSSTTNITYGGNSESLFAQSSVNNSTISSPKQPEDEAALFNNLKKSLSTMNLNPPQQSQQQQQQQQQQQQQQQESNFYSNNNNNNNNKTFNNSIPPHFISNQNSNNNNQFTSTPNLFNNNNNNTNSNNSNNNNNNNQHNSRYSTMSFSTNISNNTNISNKYVKAPAVISLDDDSDNLGDFIGKLRDMRDDEVIVSTHFK.

5 stretches are compositionally biased toward low complexity: residues 306–384 (NNNN…NNNN), 488–511 (PTKTTTSSNNSRNTSPTSSTTNIT), 559–590 (QQSQQQQQQQQQQQQQQQESNFYSNNNNNNNN), 603–612 (SNQNSNNNNQ), and 621–639 (NNNNNNTNSNNSNNNNNNN). Disordered regions lie at residues 306 to 385 (NNNN…NNNE), 488 to 513 (PTKTTTSSNNSRNTSPTSSTTNITYG), and 551 to 645 (STMN…NSRY). Positions 337–489 (NNINNNINNN…IKSLDILSPT (153 aa)) constitute a VPS9 domain.

This is an uncharacterized protein from Dictyostelium discoideum (Social amoeba).